The following is a 658-amino-acid chain: Deoxynucleoside triphosphate triphosphohydrolase SAMHD1 (658 aa).

The tract at residues 23–68 (SQPRVSEVAMQSAPLEQPAKRPRCDGSPRTPPSTPPATANLSADDD) is disordered. Ser-49 is modified (phosphoserine). Thr-52 carries the post-translational modification Phosphothreonine. Ser-55 is subject to Phosphoserine. Thr-56 is subject to Phosphothreonine. Ser-64 and Ser-125 each carry phosphoserine. The SAM domain occupies 77–142 (WEPEDVCSFL…IECIQQLSQS (66 aa)). Lys-148 and Val-149 together coordinate GTP. DGTP is bound at residue Asn-151. GTP is bound by residues Asp-169, Gln-174, and Arg-177. Residues Leu-182 and Val-188 each coordinate dGTP. Positions 196-348 (RFEHSLGVGY…GIDVDKWDYF (153 aa)) constitute an HD domain. Mn(2+)-binding residues include His-199, His-238, and Asp-239. 4 residues coordinate dGTP: Asp-239, His-247, His-265, and Glu-266. Residue His-265 is part of the active site. Asp-343 is a binding site for Mn(2+). 9 residues coordinate dGTP: Tyr-347, Asp-351, Arg-365, Arg-395, Lys-397, Asn-401, Tyr-417, His-419, and Lys-420. Arg-494 and Lys-498 together coordinate GTP. Lys-509 participates in a covalent cross-link: Glycyl lysine isopeptide (Lys-Gly) (interchain with G-Cter in SUMO2). Position 565 (Lys-565) interacts with GTP. Lys-565 contacts dGTP. A Phosphothreonine modification is found at Thr-634. Residue Thr-634 is modified to (Microbial infection) Phosphothreonine.

It belongs to the SAMHD1 family. In terms of assembly, homodimer; in absence of GTP and dNTP. Homotetramer; in GTP- and dNTP-bound form. Interacts with MRE11; leading to stimulate the exonuclease activity of MRE11. Interacts with RBBP8/CtIP. Interacts with RBBP8/CtIP. Interacts (via its C-terminus) with CD81. Requires Zn(2+) as cofactor. Post-translationally, phosphorylation at Thr-634 by CDK1 acts as a switch to control deoxynucleoside triphosphate (dNTPase)-dependent and -independent functions. Phosphorylation at Thr-634 takes place in cycling cells: it reduces the stability of the homotetramer, impairing the dNTPase activity and subsequent ability to restrict infection by viruses. It also inhibits ability to suppress LINE-1 retrotransposon activity. In contrast, phosphorylation at Thr-634 promotes DNA end resection at stalled replication forks in response to DNA damage. (Microbial infection) Phosphorylation at Thr-634 by mouse cytomegalovirus kinase M97 leads to a reduced level of dNTP hydrolase activity and the loss of viral restriction. In terms of processing, not phosphorylated by CDK1 at the C-terminus.

It localises to the nucleus. Its subcellular location is the chromosome. It carries out the reaction a 2'-deoxyribonucleoside 5'-triphosphate + H2O = a 2'-deoxyribonucleoside + triphosphate + H(+). The catalysed reaction is dATP + H2O = 2'-deoxyadenosine + triphosphate + H(+). It catalyses the reaction dCTP + H2O = 2'-deoxycytidine + triphosphate + H(+). The enzyme catalyses dGTP + H2O = 2'-deoxyguanosine + triphosphate + H(+). It carries out the reaction dTTP + H2O = thymidine + triphosphate + H(+). Its activity is regulated as follows. Allosterically activated and regulated via the combined actions of GTP and dNTPs (dATP, dGTP, dTTP and dCTP): Allosteric site 1 binds GTP, while allosteric site 2 binds dNTP. Allosteric activation promotes the formation of highly active homotetramers. Isoform 1: Phosphorylation at Thr-634 impairs homotetramerization, thereby inhibiting dNTPase activity, leading to reduced ability to restrict infection by viruses. Functionally, protein that acts both as a host restriction factor involved in defense response to virus and as a regulator of DNA end resection at stalled replication forks. Has deoxynucleoside triphosphate (dNTPase) activity, which is required to restrict infection by viruses: dNTPase activity reduces cellular dNTP levels to levels too low for retroviral reverse transcription to occur, blocking early-stage virus replication in dendritic and other myeloid cells. Likewise, suppresses LINE-1 retrotransposon activity. In addition to virus restriction, dNTPase activity acts as a regulator of DNA precursor pools by regulating dNTP pools. Phosphorylation at Thr-634 acts as a switch to control dNTPase-dependent and -independent functions: it inhibits dNTPase activity and ability to restrict infection by viruses, while it promotes DNA end resection at stalled replication forks. Functions during S phase at stalled DNA replication forks to promote the resection of gapped or reversed forks: acts by stimulating the exonuclease activity of MRE11, activating the ATR-CHK1 pathway and allowing the forks to restart replication. Its ability to promote degradation of nascent DNA at stalled replication forks is required to prevent induction of type I interferons, thereby preventing chronic inflammation. Ability to promote DNA end resection at stalled replication forks is independent of dNTPase activity. Enhances immunoglobulin hypermutation in B-lymphocytes by promoting transversion mutation. This is Deoxynucleoside triphosphate triphosphohydrolase SAMHD1 from Mus musculus (Mouse).